The sequence spans 158 residues: Large ribosomal subunit protein bL21 (158 aa).

Residues 106–158 (SKPKKAAAKPIKEEATAAKGTKDTAVEKKAEKTAEKKTASQKKAAVASKSKKD) are disordered. The span at 115-143 (PIKEEATAAKGTKDTAVEKKAEKTAEKKT) shows a compositional bias: basic and acidic residues. Residues 146-158 (QKKAAVASKSKKD) are compositionally biased toward low complexity.

It belongs to the bacterial ribosomal protein bL21 family. As to quaternary structure, part of the 50S ribosomal subunit. Contacts protein L20.

Functionally, this protein binds to 23S rRNA in the presence of protein L20. This Bartonella tribocorum (strain CIP 105476 / IBS 506) protein is Large ribosomal subunit protein bL21.